Reading from the N-terminus, the 219-residue chain is 2-phospho-L-lactate guanylyltransferase (219 aa).

The protein belongs to the CofC family. In terms of assembly, homodimer.

It carries out the reaction (2S)-2-phospholactate + GTP + H(+) = (2S)-lactyl-2-diphospho-5'-guanosine + diphosphate. It participates in cofactor biosynthesis; coenzyme F420 biosynthesis. Guanylyltransferase that catalyzes the activation of (2S)-2-phospholactate (2-PL) as (2S)-lactyl-2-diphospho-5'-guanosine, via the condensation of 2-PL with GTP. It is involved in the biosynthesis of coenzyme F420, a hydride carrier cofactor. This chain is 2-phospho-L-lactate guanylyltransferase, found in Methanocella arvoryzae (strain DSM 22066 / NBRC 105507 / MRE50).